Reading from the N-terminus, the 148-residue chain is Large ribosomal subunit protein bL9 (148 aa).

This sequence belongs to the bacterial ribosomal protein bL9 family.

Binds to the 23S rRNA. In Syntrophotalea carbinolica (strain DSM 2380 / NBRC 103641 / GraBd1) (Pelobacter carbinolicus), this protein is Large ribosomal subunit protein bL9.